The sequence spans 297 residues: Lymphocyte antigen 6 complex locus protein G6f (297 aa).

The first 16 residues, 1–16, serve as a signal peptide directing secretion; that stretch reads MAVLFLLLFLCGTPQA. In terms of domain architecture, Ig-like V-type spans 17 to 122; the sequence is ADNMQAIYVA…HNYQNWRVYD (106 aa). The Extracellular portion of the chain corresponds to 17 to 235; sequence ADNMQAIYVA…APSTGWDMPW (219 aa). Cysteine 35 and cysteine 106 are disulfide-bonded. An N-linked (GlcNAc...) asparagine glycan is attached at asparagine 88. A helical transmembrane segment spans residues 236–256; the sequence is ILMLLLTMGQGVVILALSIVL. Topologically, residues 257–297 are cytoplasmic; sequence WRQRVRGAPGRDASIPQFKPEIQVYENIHLARLGPPAHKPR. Residue tyrosine 281 is modified to Phosphotyrosine.

In terms of assembly, homodimer; disulfide-linked. Interacts with GRB2 and GRB7 in a phosphorylation-dependent manner. N-glycosylated.

It is found in the cell membrane. Functionally, may play a role in the downstream signal transduction pathways involving GRB2 and GRB7. The protein is Lymphocyte antigen 6 complex locus protein G6f (LY6G6F) of Homo sapiens (Human).